A 185-amino-acid polypeptide reads, in one-letter code: Ribosome-recycling factor (185 aa).

It belongs to the RRF family.

The protein resides in the cytoplasm. Its function is as follows. Responsible for the release of ribosomes from messenger RNA at the termination of protein biosynthesis. May increase the efficiency of translation by recycling ribosomes from one round of translation to another. This Aliivibrio fischeri (strain MJ11) (Vibrio fischeri) protein is Ribosome-recycling factor.